Reading from the N-terminus, the 260-residue chain is Archaerhodopsin-1 (260 aa).

The propeptide occupies 1–6; the sequence is MDPIAL. Topologically, residues 7 to 20 are extracellular; the sequence is TAAVGADLLGDGRP. A helical membrane pass occupies residues 21-42; sequence ETLWLGIGTLLMLIGTFYFIVK. Over 43–51 the chain is Cytoplasmic; sequence GWGVTDKEA. Residues 52–73 form a helical membrane-spanning segment; it reads REYYSITILVPGIASAAYLSMF. Topologically, residues 74–91 are extracellular; sequence FGIGLTEVQVGSEMLDIY. The helical transmembrane segment at 92–113 threads the bilayer; sequence YARYADWLFTTPLLLLDLALLA. The Cytoplasmic portion of the chain corresponds to 114–116; sequence KVD. The chain crosses the membrane as a helical span at residues 117-139; the sequence is RVSIGTLVGVDALMIVTGLVGAL. Over 140–143 the chain is Extracellular; sequence SHTP. The chain crosses the membrane as a helical span at residues 144-172; sequence LARYTWWLFSTICMIVVLYFLATSLRAAA. The Cytoplasmic portion of the chain corresponds to 173–176; the sequence is KERG. A helical membrane pass occupies residues 177–204; it reads PEVASTFNTLTALVLVLWTAYPILWIIG. At 205 to 212 the chain is on the extracellular side; sequence TEGAGVVG. The chain crosses the membrane as a helical span at residues 213–245; the sequence is LGIETLLFMVLDVTAKVGFGFILLRSRAILGDT. K228 is subject to N6-(retinylidene)lysine. At 246 to 260 the chain is on the cytoplasmic side; sequence EAPEPSAGAEASAAD.

This sequence belongs to the archaeal/bacterial/fungal opsin family.

Its subcellular location is the cell membrane. Functionally, light-driven proton pump. It may interact with bacterioruberin in the claret membrane. This is Archaerhodopsin-1 from Halorubrum ezzemoulense (Halorubrum chaoviator).